A 143-amino-acid polypeptide reads, in one-letter code: Small ribosomal subunit protein uS12 (143 aa).

The span at 1–20 shows a compositional bias: basic residues; it reads MGKCRGLRTARKLRSHRRDQ. Residues 1-26 are disordered; sequence MGKCRGLRTARKLRSHRRDQKWHDKQ. Residue Lys37 forms a Glycyl lysine isopeptide (Lys-Gly) (interchain with G-Cter in SUMO2) linkage. An N6-succinyllysine modification is found at Lys54. 3-hydroxyproline is present on Pro62. The residue at position 135 (Lys135) is an N6-acetyllysine.

It belongs to the universal ribosomal protein uS12 family. In terms of assembly, component of the 40S small ribosomal subunit. Part of the small subunit (SSU) processome, composed of more than 70 proteins and the RNA chaperone small nucleolar RNA (snoRNA) U3. Hydroxylation at Pro-62 affects translation termination efficiency.

The protein localises to the cytoplasm. The protein resides in the cytosol. It localises to the rough endoplasmic reticulum. Its subcellular location is the nucleus. It is found in the nucleolus. Functionally, component of the ribosome, a large ribonucleoprotein complex responsible for the synthesis of proteins in the cell. The small ribosomal subunit (SSU) binds messenger RNAs (mRNAs) and translates the encoded message by selecting cognate aminoacyl-transfer RNA (tRNA) molecules. The large subunit (LSU) contains the ribosomal catalytic site termed the peptidyl transferase center (PTC), which catalyzes the formation of peptide bonds, thereby polymerizing the amino acids delivered by tRNAs into a polypeptide chain. The nascent polypeptides leave the ribosome through a tunnel in the LSU and interact with protein factors that function in enzymatic processing, targeting, and the membrane insertion of nascent chains at the exit of the ribosomal tunnel. Plays an important role in translational accuracy. Part of the small subunit (SSU) processome, first precursor of the small eukaryotic ribosomal subunit. During the assembly of the SSU processome in the nucleolus, many ribosome biogenesis factors, an RNA chaperone and ribosomal proteins associate with the nascent pre-rRNA and work in concert to generate RNA folding, modifications, rearrangements and cleavage as well as targeted degradation of pre-ribosomal RNA by the RNA exosome. This is Small ribosomal subunit protein uS12 (RPS23) from Bos taurus (Bovine).